The primary structure comprises 1291 residues: Cytoplasmic FMR1-interacting protein (1291 aa).

The disordered stretch occupies residues 1269–1291; it reads HPSVISSSSHYQDPQKLRQSMNN. The segment covering 1271–1291 has biased composition (polar residues); the sequence is SVISSSSHYQDPQKLRQSMNN.

The protein belongs to the CYFIP family. As to quaternary structure, interacts with Fmr1 and Rac1. Component of the WAVE complex composed of Hem/Kette, Scar/Wave and Cyfip where it binds through its C-terminus directly to Hem.

The protein localises to the cytoplasm. Functionally, plays a role in guidance and morphology of central and peripheral axons and in synaptic morphology. Also required for formation of cell membrane protrusions and for bristle development. This is Cytoplasmic FMR1-interacting protein from Drosophila pseudoobscura pseudoobscura (Fruit fly).